We begin with the raw amino-acid sequence, 537 residues long: Tyrosine-protein kinase Fyn (537 aa).

A lipid anchor (N-myristoyl glycine) is attached at glycine 2. 2 S-palmitoyl cysteine lipidation sites follow: cysteine 3 and cysteine 6. Positions 14–35 (LTEERDGSLNQSSGYRYGTDPT) are disordered. Phosphoserine occurs at positions 21 and 26. The region spanning 82-143 (TGVTLFVALY…PSNYVAPVDS (62 aa)) is the SH3 domain. The SH2 domain occupies 149 to 246 (WYFGKLGRKD…GLCCRLVVPC (98 aa)). Tyrosine 185 carries the post-translational modification Phosphotyrosine. Residues 271–524 (LQLIKRLGNG…YLQGFLEDYF (254 aa)) enclose the Protein kinase domain. ATP contacts are provided by residues 277–285 (LGNGQFGEV) and lysine 299. The Proton acceptor role is filled by aspartate 390. Tyrosine 420 carries the post-translational modification Phosphotyrosine; by autocatalysis. Position 531 is a phosphotyrosine (tyrosine 531).

This sequence belongs to the protein kinase superfamily. Tyr protein kinase family. SRC subfamily. As to quaternary structure, interacts (via its SH3 domain) with PIK3R1 and PRMT8. Interacts with FYB1, PAG1, and SH2D1A. Interacts with CD79A (tyrosine-phosphorylated form); the interaction increases FYN activity. Interacts (via SH2 domain) with CSF1R (tyrosine phosphorylated). Interacts with TOM1L1 (phosphorylated form). Interacts with KDR (tyrosine phosphorylated). Interacts (via SH3 domain) with KLHL2 (via N-terminus). Interacts with SH2D1A and SLAMF1. Interacts with ITCH; the interaction phosphorylates ITCH and negatively regulates its activity. Interacts with FASLG. Interacts with RUNX3. Interacts with KIT. Interacts with EPHA8; possible downstream effector of EPHA8 in regulation of cell adhesion. Interacts with PTK2/FAK1; this interaction leads to PTK2/FAK1 phosphorylation and activation. Interacts with CAV1; this interaction couples integrins to the Ras-ERK pathway. Interacts with UNC119. Interacts (via SH2 domain) with PTPRH (phosphorylated form). Interacts with PTPRO (phosphorylated form). Interacts with PTPRB (phosphorylated form). Interacts with FYB2. Interacts with DSCAM. Interacts with SKAP1 and FYB1; this interaction promotes the phosphorylation of CLNK. Interacts with NEDD9; in the presence of PTK2. It depends on Mn(2+) as a cofactor. In terms of processing, autophosphorylated at Tyr-420. Phosphorylation on the C-terminal tail at Tyr-531 by CSK maintains the enzyme in an inactive state. PTPRC/CD45 dephosphorylates Tyr-531 leading to activation. Dephosphorylation at Tyr-420 by PTPN2 negatively regulates T-cell receptor signaling. Phosphorylated at tyrosine residues, which can be enhanced by NTN1. Palmitoylated. Palmitoylation at Cys-3 and Cys-6, probably by ZDHHC21, regulates subcellular location. In terms of tissue distribution, detected in spinal cord oligodendrocytes (at protein level).

The protein resides in the cytoplasm. It is found in the nucleus. Its subcellular location is the cell membrane. It localises to the perikaryon. It catalyses the reaction L-tyrosyl-[protein] + ATP = O-phospho-L-tyrosyl-[protein] + ADP + H(+). With respect to regulation, inhibited by phosphorylation of Tyr-531 by leukocyte common antigen and activated by dephosphorylation of this site. Its function is as follows. Non-receptor tyrosine-protein kinase that plays a role in many biological processes including regulation of cell growth and survival, cell adhesion, integrin-mediated signaling, cytoskeletal remodeling, cell motility, immune response and axon guidance. Inactive FYN is phosphorylated on its C-terminal tail within the catalytic domain. Following activation by PKA, the protein subsequently associates with PTK2/FAK1, allowing PTK2/FAK1 phosphorylation, activation and targeting to focal adhesions. Involved in the regulation of cell adhesion and motility through phosphorylation of CTNNB1 (beta-catenin) and CTNND1 (delta-catenin). Regulates cytoskeletal remodeling by phosphorylating several proteins including the actin regulator WAS and the microtubule-associated proteins MAP2 and MAPT. Promotes cell survival by phosphorylating AGAP2/PIKE-A and preventing its apoptotic cleavage. Participates in signal transduction pathways that regulate the integrity of the glomerular slit diaphragm (an essential part of the glomerular filter of the kidney) by phosphorylating several slit diaphragm components including NPHS1, KIRREL1 and TRPC6. Plays a role in neural processes by phosphorylating DPYSL2, a multifunctional adapter protein within the central nervous system, ARHGAP32, a regulator for Rho family GTPases implicated in various neural functions, and SNCA, a small pre-synaptic protein. Involved in reelin signaling by mediating phosphorylation of DAB1 following reelin (RELN)-binding to its receptor. Participates in the downstream signaling pathways that lead to T-cell differentiation and proliferation following T-cell receptor (TCR) stimulation. Phosphorylates PTK2B/PYK2 in response to T-cell receptor activation. Also participates in negative feedback regulation of TCR signaling through phosphorylation of PAG1, thereby promoting interaction between PAG1 and CSK and recruitment of CSK to lipid rafts. CSK maintains LCK and FYN in an inactive form. Promotes CD28-induced phosphorylation of VAV1. In mast cells, phosphorylates CLNK after activation of immunoglobulin epsilon receptor signaling. Can also promote CD244-mediated NK cell activation. The protein is Tyrosine-protein kinase Fyn of Rattus norvegicus (Rat).